The sequence spans 475 residues: Putative amidase AmiD (475 aa).

Catalysis depends on charge relay system residues K93 and S166. S190 acts as the Acyl-ester intermediate in catalysis.

Belongs to the amidase family.

The enzyme catalyses a monocarboxylic acid amide + H2O = a monocarboxylate + NH4(+). The polypeptide is Putative amidase AmiD (amiD) (Mycobacterium bovis (strain ATCC BAA-935 / AF2122/97)).